The sequence spans 452 residues: Glutamyl-tRNA(Gln) amidotransferase subunit A (452 aa).

Residues lysine 56 and serine 131 each act as charge relay system in the active site. Serine 155 acts as the Acyl-ester intermediate in catalysis.

Belongs to the amidase family. GatA subfamily. As to quaternary structure, heterotrimer of A, B and C subunits.

It carries out the reaction L-glutamyl-tRNA(Gln) + L-glutamine + ATP + H2O = L-glutaminyl-tRNA(Gln) + L-glutamate + ADP + phosphate + H(+). Functionally, allows the formation of correctly charged Gln-tRNA(Gln) through the transamidation of misacylated Glu-tRNA(Gln) in organisms which lack glutaminyl-tRNA synthetase. The reaction takes place in the presence of glutamine and ATP through an activated gamma-phospho-Glu-tRNA(Gln). This Campylobacter curvus (strain 525.92) protein is Glutamyl-tRNA(Gln) amidotransferase subunit A.